Consider the following 210-residue polypeptide: Vacuolar protein sorting-associated protein 2 homolog 3 (210 aa).

The tract at residues 1–23 (MNIFTKKPNPREVLRESKREMTQ) is disordered. Over residues 9–23 (NPREVLRESKREMTQ) the composition is skewed to basic and acidic residues. Positions 28–84 (IEKEIGSLQSEEKKLVLEIKRTAKSGNEGATKILARQLIRLRQQIANLQGSRAQMRG) form a coiled coil. The interval 178 to 200 (LSSAPKGKIGGKKAEDVGSSGID) is disordered.

Belongs to the SNF7 family. Component of the endosomal sorting required for transport complex III (ESCRT-III), composed at least of VPS2, VPS20, VPS24 and VPS32.

It localises to the endosome. In terms of biological role, component of the ESCRT-III complex, which is required for multivesicular bodies (MVBs) formation and sorting of endosomal cargo proteins into MVBs. The ESCRT-III complex is probably involved in the concentration of MVB cargo. In Arabidopsis thaliana (Mouse-ear cress), this protein is Vacuolar protein sorting-associated protein 2 homolog 3 (VPS2.3).